The sequence spans 536 residues: Lysosomal acid glucosylceramidase (536 aa).

An N-terminal signal peptide occupies residues 1-39 (MEFSSPSREECPKPLSRVSIMAGSLTGLLLLQAVSWASG). 2 cysteine pairs are disulfide-bonded: cysteine 43–cysteine 55 and cysteine 57–cysteine 62. N-linked (GlcNAc...) asparagine glycans are attached at residues asparagine 58, asparagine 98, and asparagine 185. The active-site Proton donor is the glutamate 274. The N-linked (GlcNAc...) asparagine glycan is linked to asparagine 309. The active-site Nucleophile is the glutamate 379. N-linked (GlcNAc...) asparagine glycosylation is present at asparagine 501.

The protein belongs to the glycosyl hydrolase 30 family. In terms of assembly, interacts with saposin-C. Interacts with SCARB2. Interacts with TCP1. May interacts with SNCA; this interaction may inhibit the glucosylceramidase activity. Interacts with GRN; this interaction prevents aggregation of GBA1-SCARB2 complex via interaction with HSPA1A upon stress.

Its subcellular location is the lysosome membrane. The enzyme catalyses a beta-D-glucosyl-(1&lt;-&gt;1')-N-acylsphing-4-enine + H2O = an N-acylsphing-4-enine + D-glucose. It catalyses the reaction a beta-D-galactosyl-(1&lt;-&gt;1')-N-acylsphing-4-enine + H2O = an N-acylsphing-4-enine + D-galactose. It carries out the reaction cholesteryl 3-beta-D-glucoside + H2O = cholesterol + D-glucose. The catalysed reaction is a beta-D-glucosyl-(1&lt;-&gt;1')-N-acylsphing-4-enine + cholesterol = cholesteryl 3-beta-D-glucoside + an N-acylsphing-4-enine. The enzyme catalyses beta-D-glucosyl-N-(9Z-octadecenoyl)-sphing-4E-enine + cholesterol = N-(9Z-octadecenoyl)-sphing-4-enine + cholesteryl 3-beta-D-glucoside. It catalyses the reaction beta-D-glucosyl-(1&lt;-&gt;1')-N-hexadecanoylsphing-4-enine + cholesterol = cholesteryl 3-beta-D-glucoside + N-hexadecanoylsphing-4-enine. It carries out the reaction beta-D-glucosyl-N-octanoylsphing-4E-enine + cholesterol = N-octanoylsphing-4-enine + cholesteryl 3-beta-D-glucoside. The catalysed reaction is beta-D-glucosyl-N-dodecanoylsphing-4-enine + cholesterol = N-dodecanoylsphing-4-enine + cholesteryl 3-beta-D-glucoside. The enzyme catalyses beta-D-glucosyl-(1&lt;-&gt;1)-N-octadecanoylsphing-4-enine + cholesterol = N-octadecanoylsphing-4-enine + cholesteryl 3-beta-D-glucoside. It catalyses the reaction beta-D-glucosyl-(1&lt;-&gt;1')-N-(15Z-tetracosenoyl)-sphing-4-enine + cholesterol = N-(15Z-tetracosenoyl)-sphing-4-enine + cholesteryl 3-beta-D-glucoside. It carries out the reaction a beta-D-galactosyl-(1&lt;-&gt;1')-N-acylsphing-4-enine + cholesterol = cholesteryl 3-beta-D-galactoside + an N-acylsphing-4-enine. The catalysed reaction is 1-(beta-D-galactosyl)-N-dodecanoylsphing-4-enine + cholesterol = cholesteryl 3-beta-D-galactoside + N-dodecanoylsphing-4-enine. The enzyme catalyses a beta-D-xylosyl-(1&lt;-&gt;1')-N-acylsphing-4-enine + cholesterol = cholesteryl 3-beta-D-xyloside + an N-acylsphing-4-enine. It catalyses the reaction beta-D-xylosyl-(1&lt;-&gt;1')-N-(9Z-octadecenoyl)-sphing-4-enine + cholesterol = cholesteryl 3-beta-D-xyloside + N-(9Z-octadecenoyl)-sphing-4-enine. Its pathway is steroid metabolism; cholesterol metabolism. The protein operates within sphingolipid metabolism. With respect to regulation, synergistically activated by saposin-A and saposin-C, two saposin peptides produced by proteolytic processing of prosaposin/PSAP. Saposin-C activates GBA1 through its recruitment to membranes. The membrane structure and composition in anionic phospholipids are also important for the activation. Activated by PKC in the salvage pathway of ceramide formation. Inhibited by conduritol B epoxide/CBE. Glucosylceramidase that catalyzes, within the lysosomal compartment, the hydrolysis of glucosylceramides/GlcCers (such as beta-D-glucosyl-(1&lt;-&gt;1')-N-acylsphing-4-enine) into free ceramides (such as N-acylsphing-4-enine) and glucose. Plays a central role in the degradation of complex lipids and the turnover of cellular membranes. Through the production of ceramides, participates in the PKC-activated salvage pathway of ceramide formation. Catalyzes the glucosylation of cholesterol, through a transglucosylation reaction where glucose is transferred from GlcCer to cholesterol. GlcCer containing mono-unsaturated fatty acids (such as beta-D-glucosyl-N-(9Z-octadecenoyl)-sphing-4-enine) are preferred as glucose donors for cholesterol glucosylation when compared with GlcCer containing same chain length of saturated fatty acids (such as beta-D-glucosyl-N-octadecanoyl-sphing-4-enine). Under specific conditions, may alternatively catalyze the reverse reaction, transferring glucose from cholesteryl 3-beta-D-glucoside to ceramide. Can also hydrolyze cholesteryl 3-beta-D-glucoside producing glucose and cholesterol. Catalyzes the hydrolysis of galactosylceramides/GalCers (such as beta-D-galactosyl-(1&lt;-&gt;1')-N-acylsphing-4-enine), as well as the transfer of galactose between GalCers and cholesterol in vitro, but with lower activity than with GlcCers. Contrary to GlcCer and GalCer, xylosylceramide/XylCer (such as beta-D-xyosyl-(1&lt;-&gt;1')-N-acylsphing-4-enine) is not a good substrate for hydrolysis, however it is a good xylose donor for transxylosylation activity to form cholesteryl 3-beta-D-xyloside. This chain is Lysosomal acid glucosylceramidase, found in Homo sapiens (Human).